The chain runs to 159 residues: Phosphopantetheine adenylyltransferase (159 aa).

Thr-10 is a binding site for substrate. ATP contacts are provided by residues 10-11 and His-18; that span reads TF. The substrate site is built by Lys-42, Met-74, and Arg-88. ATP-binding positions include 89 to 91, Glu-99, and 124 to 130; these read GLR and WSFISSS.

The protein belongs to the bacterial CoaD family. In terms of assembly, homohexamer. It depends on Mg(2+) as a cofactor.

It is found in the cytoplasm. It carries out the reaction (R)-4'-phosphopantetheine + ATP + H(+) = 3'-dephospho-CoA + diphosphate. Its pathway is cofactor biosynthesis; coenzyme A biosynthesis; CoA from (R)-pantothenate: step 4/5. In terms of biological role, reversibly transfers an adenylyl group from ATP to 4'-phosphopantetheine, yielding dephospho-CoA (dPCoA) and pyrophosphate. The protein is Phosphopantetheine adenylyltransferase of Pectobacterium carotovorum subsp. carotovorum (strain PC1).